The following is a 1188-amino-acid chain: DNA polymerase (1188 aa).

The interval 1-74 (MALVPSPRAG…PAANNVSLTP (74 aa)) is disordered. The segment covering 31–41 (STAGAAPTATR) has biased composition (low complexity).

It belongs to the DNA polymerase type-B family. Heterodimer with the terminal protein; this heterodimer binds to bp 9 to 18 of the genome. Forms a complex with viral pTP, DBP and hosts NFIA and POU2F1/OCT1 for initiation of replication.

It is found in the host nucleus. It carries out the reaction DNA(n) + a 2'-deoxyribonucleoside 5'-triphosphate = DNA(n+1) + diphosphate. Its function is as follows. Eukaryotic-type DNA polymerase involved in viral genomic replication. DNA synthesis is protein primed, and acts in a strand displacement replication. Assembles in complex with viral pTP, DBP, host NFIA and host POU2F1/OCT1 on viral origin of replication. The polymerase covalently transfers dCMP onto pTP, thereby initiating complementary strand synthesis. The chain is DNA polymerase from Human adenovirus F serotype 40 (HAdV-40).